We begin with the raw amino-acid sequence, 351 residues long: MDTPNTFQNDDEIKAQAQVWKHMFGFAETIMLRSTVSLGIPDIIHNNGPVTLSQLVTHLPLKSTSIDRFHHFMRYLVHMQLFTISTDQITKEDKYELTPASKLLVHGHQKSLAPYVMLQTHPEEFSVWSHVINVLDGKKPYWESNDTSMYEKTEGDPEINEILNDAMTSHSTFMLPALVSGLMKENVLDGVASIVDVGGNSGVVAKGIVDAFPHVKCSVMDLNHVIERVIKNPKLDYVAGDMFTSIPNADAILLKSTLHNYEDDDCIKILNIAKEALPSTGGKVILVEIVVDTENLPLFTSARLSMGMDMMLMSGKERTKKEWEDLLRKANFTSHQVIPIMAIESIIVAYS.

5 residues coordinate S-adenosyl-L-methionine: Gly198, Asp221, Asp241, Met242, and Lys255. Catalysis depends on His259, which acts as the Proton acceptor.

Belongs to the class I-like SAM-binding methyltransferase superfamily. Cation-independent O-methyltransferase family. COMT subfamily. In terms of assembly, homodimer.

It catalyses the reaction columbamine + S-adenosyl-L-methionine = palmatine + S-adenosyl-L-homocysteine + H(+). The catalysed reaction is (S)-tetrahydrocolumbamine + S-adenosyl-L-methionine = (S)-tetrahydropalmatine + S-adenosyl-L-homocysteine + H(+). The protein operates within alkaloid biosynthesis; palmatine biosynthesis; palmatine from columbamine: step 1/1. In terms of biological role, catalyzes the conversion of tetrahydrocolumbamine to (S)-tetrahydropalmatine and of columbamine to palmatine, an isoquinoline alkaloid. In Coptis japonica (Japanese goldthread), this protein is Columbamine O-methyltransferase.